The following is a 557-amino-acid chain: Dihydroxy-acid dehydratase (557 aa).

Mg(2+) is bound at residue Asp78. Cys119 contacts [2Fe-2S] cluster. Residues Asp120 and Lys121 each contribute to the Mg(2+) site. At Lys121 the chain carries N6-carboxylysine. A [2Fe-2S] cluster-binding site is contributed by Cys192. Glu446 lines the Mg(2+) pocket. Ser472 functions as the Proton acceptor in the catalytic mechanism.

Belongs to the IlvD/Edd family. In terms of assembly, homodimer. The cofactor is [2Fe-2S] cluster. It depends on Mg(2+) as a cofactor.

The enzyme catalyses (2R)-2,3-dihydroxy-3-methylbutanoate = 3-methyl-2-oxobutanoate + H2O. The catalysed reaction is (2R,3R)-2,3-dihydroxy-3-methylpentanoate = (S)-3-methyl-2-oxopentanoate + H2O. It participates in amino-acid biosynthesis; L-isoleucine biosynthesis; L-isoleucine from 2-oxobutanoate: step 3/4. Its pathway is amino-acid biosynthesis; L-valine biosynthesis; L-valine from pyruvate: step 3/4. Functions in the biosynthesis of branched-chain amino acids. Catalyzes the dehydration of (2R,3R)-2,3-dihydroxy-3-methylpentanoate (2,3-dihydroxy-3-methylvalerate) into 2-oxo-3-methylpentanoate (2-oxo-3-methylvalerate) and of (2R)-2,3-dihydroxy-3-methylbutanoate (2,3-dihydroxyisovalerate) into 2-oxo-3-methylbutanoate (2-oxoisovalerate), the penultimate precursor to L-isoleucine and L-valine, respectively. This Campylobacter curvus (strain 525.92) protein is Dihydroxy-acid dehydratase.